The following is a 268-amino-acid chain: MTEQYQHRARKRFGQNFLHDAGVIDKILRAIRARPEDRLLEIGPGQGALTEGLLDSGAQLDVVELDKDLIPILNGQFASKPNFNLHQGDALKFDFNTLGADPRSLRVVGNLPYNISTPLIFHLLQNASLIRDMHFMLQKEVVERMAAGPGGGDWGRLSIMVQYHCRVEHLFNVGPGAFNPPPKVDSAIVRLVPYETLPHPAKDHRVLERIVREAFNQRRKTLRNTLKLLLTSDEITASGVDGSLRPEQLDLAAFVRLADTLSEKVVTE.

S-adenosyl-L-methionine is bound by residues Asn16, Leu18, Gly43, Glu64, Asp89, and Asn110.

It belongs to the class I-like SAM-binding methyltransferase superfamily. rRNA adenine N(6)-methyltransferase family. RsmA subfamily.

The protein localises to the cytoplasm. The catalysed reaction is adenosine(1518)/adenosine(1519) in 16S rRNA + 4 S-adenosyl-L-methionine = N(6)-dimethyladenosine(1518)/N(6)-dimethyladenosine(1519) in 16S rRNA + 4 S-adenosyl-L-homocysteine + 4 H(+). Its function is as follows. Specifically dimethylates two adjacent adenosines (A1518 and A1519) in the loop of a conserved hairpin near the 3'-end of 16S rRNA in the 30S particle. May play a critical role in biogenesis of 30S subunits. The chain is Ribosomal RNA small subunit methyltransferase A from Pseudomonas syringae pv. syringae (strain B728a).